A 174-amino-acid polypeptide reads, in one-letter code: MRGLLVATWIFVSVAASATPTTTTKSPPPTTTTLSPQILKAKLPPVVKNATWECGTDEFTKSISEGEIQAKCPKLRDHINSCCLQHDGCYEAQSGQKFCDDTFCSCLERRSRSSKSCHDESAPLFCDLVRTFGDGAYEASGPNASTTEESPAEKDDYDYESHVAGLNATPSSST.

The first 18 residues, 1–18 (MRGLLVATWIFVSVAASA), serve as a signal peptide directing secretion. N49 and N143 each carry an N-linked (GlcNAc...) asparagine glycan. The interval 137 to 174 (YEASGPNASTTEESPAEKDDYDYESHVAGLNATPSSST) is disordered.

Belongs to the phospholipase A2 family.

Its subcellular location is the secreted. The protein is Phospholipase A2-like protein Y52B11A.8 of Caenorhabditis elegans.